Here is a 155-residue protein sequence, read N- to C-terminus: Small ribosomal subunit protein uS7c (155 aa).

Belongs to the universal ribosomal protein uS7 family. As to quaternary structure, part of the 30S ribosomal subunit.

It is found in the plastid. The protein resides in the chloroplast. One of the primary rRNA binding proteins, it binds directly to 16S rRNA where it nucleates assembly of the head domain of the 30S subunit. The chain is Small ribosomal subunit protein uS7c (rps7) from Schisandra chinensis (Chinese magnolia vine).